A 730-amino-acid chain; its full sequence is Rap1 GTPase-activating protein 2 (730 aa).

Serine 7 is subject to Phosphoserine; by PKG/PRKG1; in vitro. The segment at 32 to 53 (ANSSDATLPDRPLSPPLTAPPT) is disordered. Serine 45 is modified (phosphoserine). The residue at position 49 (threonine 49) is a Phosphothreonine. Positions 248-464 (IVSYDEHEVN…RTRAALLDNL (217 aa)) constitute a Rap-GAP domain. The residue at position 507 (serine 507) is a Phosphoserine. Positions 509–533 (ETMVGGQKKSHSGGIPGSLSGGISH) are disordered. Serine 544, serine 558, serine 564, serine 612, and serine 613 each carry phosphoserine. A disordered region spans residues 552-730 (VKNQSRSPIK…LSHASSGAGH (179 aa)). Residues 585–613 (DSTSSTPKTPDGGHSSQEIKSETSSNPSS) are compositionally biased toward polar residues. A compositionally biased stretch (basic and acidic residues) spans 618 to 631 (PNKEKPFMKLKENG). The segment covering 635–647 (SRSSSSTSSVSST) has biased composition (low complexity). Over residues 661-670 (GSQPSTTSPF) the composition is skewed to polar residues. Residues 678–687 (SPSPSSESPS) show a composition bias toward low complexity. Polar residues predominate over residues 699 to 712 (RSPTDAKSRNSPRS).

In vitro phosphorylated by cGMP-dependent protein kinase 1 (cGKI) at Ser-7; the phosphorylation probably does not regulate GAP activity. Isoform 1 and isoform 2 are expressed in platelets with isoform 2 being the predominant form. Expressed in lymphocytes, heart, testis and pancreas.

Its subcellular location is the cytoplasm. It localises to the perinuclear region. In terms of biological role, GTPase activator for the nuclear Ras-related regulatory protein RAP-1A (KREV-1), converting it to the putatively inactive GDP-bound state. This is Rap1 GTPase-activating protein 2 (RAP1GAP2) from Homo sapiens (Human).